The sequence spans 368 residues: Flagellar P-ring protein (368 aa).

An N-terminal signal peptide occupies residues 1–22 (MLIPLARAVLALELLGAGAAHA).

The protein belongs to the FlgI family. In terms of assembly, the basal body constitutes a major portion of the flagellar organelle and consists of four rings (L,P,S, and M) mounted on a central rod.

Its subcellular location is the periplasm. The protein localises to the bacterial flagellum basal body. Assembles around the rod to form the L-ring and probably protects the motor/basal body from shearing forces during rotation. The polypeptide is Flagellar P-ring protein (Bordetella pertussis (strain Tohama I / ATCC BAA-589 / NCTC 13251)).